Consider the following 251-residue polypeptide: tRNA pseudouridine synthase A (251 aa).

The active-site Nucleophile is the aspartate 26. Residue tyrosine 98 coordinates substrate.

Belongs to the tRNA pseudouridine synthase TruA family. Homodimer.

It catalyses the reaction uridine(38/39/40) in tRNA = pseudouridine(38/39/40) in tRNA. In terms of biological role, formation of pseudouridine at positions 38, 39 and 40 in the anticodon stem and loop of transfer RNAs. The sequence is that of tRNA pseudouridine synthase A from Mycolicibacterium paratuberculosis (strain ATCC BAA-968 / K-10) (Mycobacterium paratuberculosis).